The following is a 321-amino-acid chain: NADH-ubiquinone oxidoreductase chain 1 (321 aa).

A run of 8 helical transmembrane segments spans residues 6 to 26, 67 to 87, 103 to 123, 143 to 163, 174 to 194, 220 to 240, 256 to 276, and 296 to 316; these read IVPP…LTAL, LLAT…LALA, LGLL…LWSG, ISYE…SGGF, PLYL…STLA, ASPF…MNTL, ALFT…FLWV, and FLPM…SMFG.

This sequence belongs to the complex I subunit 1 family.

It is found in the mitochondrion inner membrane. The enzyme catalyses a ubiquinone + NADH + 5 H(+)(in) = a ubiquinol + NAD(+) + 4 H(+)(out). Core subunit of the mitochondrial membrane respiratory chain NADH dehydrogenase (Complex I) that is believed to belong to the minimal assembly required for catalysis. Complex I functions in the transfer of electrons from NADH to the respiratory chain. The immediate electron acceptor for the enzyme is believed to be ubiquinone. The polypeptide is NADH-ubiquinone oxidoreductase chain 1 (MT-ND1) (Alligator mississippiensis (American alligator)).